Reading from the N-terminus, the 587-residue chain is Pectinesterase 2 (587 aa).

Residues 1-40 (MAPIKEFISKFSDFKNNKKLILSSAAIALLLLASIVGIAA) form the signal peptide. Asn99 and Asn218 each carry an N-linked (GlcNAc...) asparagine glycan. Positions 351 and 381 each coordinate substrate. Asp404 serves as the catalytic Proton donor. A disulfide bridge links Cys418 with Cys438. Asp425 acts as the Nucleophile in catalysis. The substrate site is built by Arg493 and Trp495.

It in the N-terminal section; belongs to the PMEI family. This sequence in the C-terminal section; belongs to the pectinesterase family. Expressed in flower buds.

The protein resides in the secreted. It localises to the cell wall. It carries out the reaction [(1-&gt;4)-alpha-D-galacturonosyl methyl ester](n) + n H2O = [(1-&gt;4)-alpha-D-galacturonosyl](n) + n methanol + n H(+). The protein operates within glycan metabolism; pectin degradation; 2-dehydro-3-deoxy-D-gluconate from pectin: step 1/5. Acts in the modification of cell walls via demethylesterification of cell wall pectin. This chain is Pectinesterase 2 (PME2), found in Arabidopsis thaliana (Mouse-ear cress).